A 370-amino-acid chain; its full sequence is Histidinol-phosphate aminotransferase (370 aa).

N6-(pyridoxal phosphate)lysine is present on K223.

This sequence belongs to the class-II pyridoxal-phosphate-dependent aminotransferase family. Histidinol-phosphate aminotransferase subfamily. Homodimer. Pyridoxal 5'-phosphate serves as cofactor.

The enzyme catalyses L-histidinol phosphate + 2-oxoglutarate = 3-(imidazol-4-yl)-2-oxopropyl phosphate + L-glutamate. It functions in the pathway amino-acid biosynthesis; L-histidine biosynthesis; L-histidine from 5-phospho-alpha-D-ribose 1-diphosphate: step 7/9. The chain is Histidinol-phosphate aminotransferase from Methylobacterium nodulans (strain LMG 21967 / CNCM I-2342 / ORS 2060).